We begin with the raw amino-acid sequence, 1176 residues long: Leucine--tRNA ligase, cytoplasmic (1176 aa).

Positions 52 and 54 each coordinate L-leucine. A 'HIGH' region motif is present at residues 60–63 (HLGH). Residues 115-142 (PDFPDEEDEEEETNVKTEDTRIKDKAKG) are disordered. Residues 117–126 (FPDEEDEEEE) show a composition bias toward acidic residues. The span at 127–139 (TNVKTEDTRIKDK) shows a compositional bias: basic and acidic residues. Ser-167 carries the phosphoserine modification. An editing domain region spans residues 260–509 (GPQEYTLLKL…DAGDALIYME (250 aa)). Residues Leu-594 and Ser-597 each contribute to the L-leucine site. A 'KMSKS' region motif is present at residues 716 to 720 (KMSKS). Lys-719 contacts ATP. At Ser-720 the chain carries Phosphoserine. N6-acetyllysine occurs at positions 970 and 1047.

The protein belongs to the class-I aminoacyl-tRNA synthetase family.

The protein localises to the cytoplasm. It carries out the reaction tRNA(Leu) + L-leucine + ATP = L-leucyl-tRNA(Leu) + AMP + diphosphate. It catalyses the reaction L-methionyl-tRNA(Leu) + H2O = tRNA(Leu) + L-methionine + H(+). 5-fluoro-1,3-dihydro-1-hydroxy-1,2-benzoxaborole inhibits LARS1 by forming a covalent adduct with the 3' adenosine of tRNA(Leu) at the editing site, thus locking the enzyme in an inactive conformation. Its function is as follows. Aminoacyl-tRNA synthetase that catalyzes the specific attachment of leucine to its cognate tRNA (tRNA(Leu)). It performs tRNA aminoacylation in a two-step reaction: Leu is initially activated by ATP to form a leucyl-adenylate (Leu-AMP) intermediate; then the leucyl moiety is transferred to the acceptor 3' end of the tRNA to yield leucyl-tRNA. To improve the fidelity of catalytic reactions, it is also able to hydrolyze misactivated aminoacyl-adenylate intermediates (pre-transfer editing) and mischarged aminoacyl-tRNAs (post-transfer editing). The polypeptide is Leucine--tRNA ligase, cytoplasmic (LARS1) (Pongo abelii (Sumatran orangutan)).